A 523-amino-acid polypeptide reads, in one-letter code: Bifunctional purine biosynthesis protein PurH (523 aa).

The 149-residue stretch at 1–149 (MSDPVIKRAL…KNNESVTVIT (149 aa)) folds into the MGS-like domain.

This sequence belongs to the PurH family.

It carries out the reaction (6R)-10-formyltetrahydrofolate + 5-amino-1-(5-phospho-beta-D-ribosyl)imidazole-4-carboxamide = 5-formamido-1-(5-phospho-D-ribosyl)imidazole-4-carboxamide + (6S)-5,6,7,8-tetrahydrofolate. The catalysed reaction is IMP + H2O = 5-formamido-1-(5-phospho-D-ribosyl)imidazole-4-carboxamide. Its pathway is purine metabolism; IMP biosynthesis via de novo pathway; 5-formamido-1-(5-phospho-D-ribosyl)imidazole-4-carboxamide from 5-amino-1-(5-phospho-D-ribosyl)imidazole-4-carboxamide (10-formyl THF route): step 1/1. It participates in purine metabolism; IMP biosynthesis via de novo pathway; IMP from 5-formamido-1-(5-phospho-D-ribosyl)imidazole-4-carboxamide: step 1/1. This is Bifunctional purine biosynthesis protein PurH from Chlorobaculum parvum (strain DSM 263 / NCIMB 8327) (Chlorobium vibrioforme subsp. thiosulfatophilum).